Consider the following 224-residue polypeptide: CMRF35-like molecule 6 (224 aa).

An N-terminal signal peptide occupies residues 1-20 (MTARAWASWRSSALLLLLVP). Residues 21–183 (GYFPLSHPMT…HPGSLFSNVR (163 aa)) lie on the Extracellular side of the membrane. Positions 22 to 130 (YFPLSHPMTV…HDPIVEVEVS (109 aa)) constitute an Ig-like V-type domain. 2 disulfides stabilise this stretch: Cys-43/Cys-110 and Cys-57/Cys-65. N-linked (GlcNAc...) asparagine glycans are attached at residues Asn-90 and Asn-99. A compositionally biased stretch (polar residues) spans 136–151 (TTTASSPQSSMGTSGP). The interval 136–174 (TTTASSPQSSMGTSGPPTKLPVHTWPSVTRKDSPEPSPH) is disordered. A helical transmembrane segment spans residues 184–204 (FLLLVLLELPLLLSMLGAVLW). At 205–224 (VNRPQRSSRSRQNWPKGENQ) the chain is on the cytoplasmic side.

This sequence belongs to the CD300 family. In terms of tissue distribution, present on the surface of monocytes, neutrophils, a proportion of peripheral blood T- and B-lymphocytes and lymphocytic cell lines.

It localises to the cell membrane. The chain is CMRF35-like molecule 6 (CD300C) from Homo sapiens (Human).